The primary structure comprises 277 residues: 4-hydroxy-tetrahydrodipicolinate reductase (277 aa).

9-14 (GATGRM) is a binding site for NAD(+). Lys-37 contributes to the NADP(+) binding site. 75-77 (GTS) contributes to the NAD(+) binding site. The active-site Proton donor/acceptor is the His-132. Lys-136 (proton donor) is an active-site residue. 142 to 143 (GT) lines the (S)-2,3,4,5-tetrahydrodipicolinate pocket. Disordered regions lie at residues 154–173 (ARGARGPVQAPHTDQRARGQ) and 247–277 (ERAAQAAAGDAPSGPVDDGGPSGQAATVTSA). Residues 250–265 (AQAAAGDAPSGPVDDG) show a composition bias toward low complexity.

Belongs to the DapB family.

The protein localises to the cytoplasm. The enzyme catalyses (S)-2,3,4,5-tetrahydrodipicolinate + NAD(+) + H2O = (2S,4S)-4-hydroxy-2,3,4,5-tetrahydrodipicolinate + NADH + H(+). The catalysed reaction is (S)-2,3,4,5-tetrahydrodipicolinate + NADP(+) + H2O = (2S,4S)-4-hydroxy-2,3,4,5-tetrahydrodipicolinate + NADPH + H(+). It participates in amino-acid biosynthesis; L-lysine biosynthesis via DAP pathway; (S)-tetrahydrodipicolinate from L-aspartate: step 4/4. In terms of biological role, catalyzes the conversion of 4-hydroxy-tetrahydrodipicolinate (HTPA) to tetrahydrodipicolinate. The sequence is that of 4-hydroxy-tetrahydrodipicolinate reductase from Clavibacter michiganensis subsp. michiganensis (strain NCPPB 382).